A 528-amino-acid chain; its full sequence is Peptide chain release factor 3 (528 aa).

Residues 11–279 (NKRRTFAIIS…GIVEWAPKPL (269 aa)) enclose the tr-type G domain. GTP is bound by residues 20-27 (SHPDAGKT), 88-92 (DTPGH), and 142-145 (NKLD).

This sequence belongs to the TRAFAC class translation factor GTPase superfamily. Classic translation factor GTPase family. PrfC subfamily.

Its subcellular location is the cytoplasm. Functionally, increases the formation of ribosomal termination complexes and stimulates activities of RF-1 and RF-2. It binds guanine nucleotides and has strong preference for UGA stop codons. It may interact directly with the ribosome. The stimulation of RF-1 and RF-2 is significantly reduced by GTP and GDP, but not by GMP. This chain is Peptide chain release factor 3, found in Shewanella sp. (strain W3-18-1).